The following is a 146-amino-acid chain: Alpha-amylase inhibitor BMAI-1 (146 aa).

Residues 1 to 14 (PTSVAVDQGSMVSN) form the signal peptide. N-linked (GlcNAc...) asparagine glycosylation occurs at Asn125.

It belongs to the protease inhibitor I6 (cereal trypsin/alpha-amylase inhibitor) family. As to quaternary structure, monomer. Five disulfide bonds, which are essential for the inhibitor activity, are probably present. Post-translationally, glycosylated. In terms of tissue distribution, endosperm.

The protein localises to the secreted. Functionally, could be involved in insect defense mechanisms. Inhibits insect-type alpha-amylase. This chain is Alpha-amylase inhibitor BMAI-1 (IAM1), found in Hordeum vulgare (Barley).